The chain runs to 146 residues: Protein new-glue 3 (146 aa).

Residues 1-23 (MRYSCVLLLLATVACLLIPQTGG) form the signal peptide. Residues 23 to 146 (GSTATTTSTS…RRARSARRLS (124 aa)) form a disordered region. The span at 24-66 (STATTTSTSASATTTTSASATTTTASDTTTTTAATTTTSSSSS) shows a compositional bias: low complexity. Repeat copies occupy residues 31 to 38 (TSASATTT), 39 to 46 (TSASATTT), 47 to 53 (TASDTTT), and 54 to 61 (TTAATTTT). The tract at residues 31-61 (TSASATTTTSASATTTTASDTTTTTAATTTT) is 4 X 8 AA approximate tandem repeats of T-S-A-S-A-T-T-T. Basic residues predominate over residues 67 to 92 (KSKKKKRTYHYTRHVYRPKRIRHIYR). A compositionally biased stretch (basic and acidic residues) spans 93–106 (HKADDDESSTDRTS). Low complexity predominate over residues 116 to 132 (SSSSSSSGSTSSRSGNS). A compositionally biased stretch (basic residues) spans 133 to 146 (RIRRRRARSARRLS).

Salivary gland specific.

It localises to the secreted. In Drosophila melanogaster (Fruit fly), this protein is Protein new-glue 3 (ng3).